The following is a 69-amino-acid chain: Putative membrane protein insertion efficiency factor (69 aa).

It belongs to the UPF0161 family.

The protein resides in the cell inner membrane. Functionally, could be involved in insertion of integral membrane proteins into the membrane. This is Putative membrane protein insertion efficiency factor from Nitrosomonas europaea (strain ATCC 19718 / CIP 103999 / KCTC 2705 / NBRC 14298).